The primary structure comprises 433 residues: C2H2 type master regulator of conidiophore development brlA (433 aa).

Disordered stretches follow at residues 23–64 and 240–265; these read PSEC…SHYH and KTHT…PVSR. Residues 30–48 show a composition bias toward low complexity; that stretch reads TSSFSPLDSPTPTPTSLYS. The segment covering 240-264 has biased composition (polar residues); that stretch reads KTHTPSTPHRSVSMGTPSGSDTPVS. 2 C2H2-type zinc fingers span residues 321–345 and 351–376; these read FKCK…MKSH and HVCW…TKTH. The tract at residues 391–416 is disordered; the sequence is ETSQDFDPDFRGQLTPDGRPIYGSKL.

The protein localises to the nucleus. Functionally, brlA, abaA and wetA are pivotal regulators of conidiophore development and conidium maturation. They act individually and together to regulate their own expression and that of numerous other sporulation-specific genes. Binds promoters of target genes at brlA response elements (BREs) containing the conserved sequence 5'-(C/A)(A/G)AGGG(G/A)-3'. Is not required for penicillin V production. The sequence is that of C2H2 type master regulator of conidiophore development brlA from Penicillium rubens (strain ATCC 28089 / DSM 1075 / NRRL 1951 / Wisconsin 54-1255) (Penicillium chrysogenum).